The following is a 446-amino-acid chain: Endoplasmic reticulum membrane adapter protein XK (446 aa).

Over 1–2 (MK) the chain is Cytoplasmic. A helical transmembrane segment spans residues 3–23 (FPASVIASVFLFVAETAAALY). Topologically, residues 24 to 37 (LSSTYRSAGDRMWQ) are extracellular. A helical membrane pass occupies residues 38–58 (VLTLLFSLMPCALVQFTLLFV). Residues 59 to 68 (HRDLSRDRPL) lie on the Cytoplasmic side of the membrane. The chain crosses the membrane as a helical span at residues 69-89 (ALLMHLLQLGPLYRCCEVFCI). Residues 90-140 (YCQSDQNEEPYVSITKKRQMPKDGLSEEVEKEVGQAEGKLITHRSAFSRAS) are Extracellular-facing. Position 115 is a phosphoserine (Ser-115). Residues 141 to 161 (VIQAFLGSAPQLTLQLYITVL) form a helical membrane-spanning segment. Residues 162–171 (EQNITTGRCF) lie on the Cytoplasmic side of the membrane. Residues 172–192 (IMTLSLLSIVYGALRCNILAI) form a helical membrane-spanning segment. Residues 193-208 (KIKYDEYEVKVKPLAY) lie on the Extracellular side of the membrane. Residues 209–229 (VCIFLWRSFEIATRVIVLVLF) form a helical membrane-spanning segment. The Cytoplasmic segment spans residues 230–235 (TSVLKI). Residues 236-256 (WVVAVILVNFFSFFLYPWIVF) form a helical membrane-spanning segment. The Extracellular portion of the chain corresponds to 257-277 (WCSGSPFPENIEKALSRVGTT). Residues 278–298 (IVLCFLTLLYAGINMFCWSAV) traverse the membrane as a helical segment. Residues 299–317 (QLKIDNPELISKSQNWYRL) lie on the Cytoplasmic side of the membrane. The chain crosses the membrane as a helical span at residues 318–338 (LIYYMTRFIENSVLLLLWYFF). At 339 to 349 (KTDIYMYVCAP) the chain is on the extracellular side. A helical membrane pass occupies residues 350 to 370 (LLILQLLIGYCTGILFMLVFY). Topologically, residues 371 to 446 (QFFHPCKKLF…IWTAVDLCSA (76 aa)) are cytoplasmic.

It belongs to the XK family. As to quaternary structure, heterodimer with Kell; disulfide-linked. Interacts with VPS13A.

The protein resides in the endoplasmic reticulum membrane. Functionally, recruits the lipid transfer protein VPS13A from lipid droplets to the endoplasmic reticulum (ER) membrane. This Mus musculus (Mouse) protein is Endoplasmic reticulum membrane adapter protein XK.